Reading from the N-terminus, the 215-residue chain is Myelin protein zero-like protein 2 (215 aa).

A signal peptide spans 1 to 26; sequence MYGKSPTRAVLFLLGLQLTALWPTAA. The 115-residue stretch at 27-141 folds into the Ig-like V-type domain; the sequence is VEIYTPRVLE…DGLIGEIQLS (115 aa). Residues 27–154 lie on the Extracellular side of the membrane; that stretch reads VEIYTPRVLE…TVRFSEIHFL (128 aa). 2 N-linked (GlcNAc...) asparagine glycosylation sites follow: Asn-39 and Asn-118. A disulfide bridge links Cys-47 with Cys-123. Residues 155–175 traverse the membrane as a helical segment; it reads ALAIGSACALMVIIVIVVVLF. At 176–215 the chain is on the cytoplasmic side; the sequence is QHFRKKRRAERAHRVVEIKSKEEEKLNQEKKASVSLEYTD.

The protein belongs to the myelin P0 protein family.

It localises to the membrane. In terms of biological role, mediates homophilic cell-cell adhesion. The sequence is that of Myelin protein zero-like protein 2 (MPZL2) from Bos taurus (Bovine).